The following is a 393-amino-acid chain: 5-amino-6-(D-ribitylamino)uracil--L-tyrosine 4-hydroxyphenyl transferase (393 aa).

In terms of domain architecture, Radical SAM core spans 67–322 (VTYVINRNIN…GQWIVNHQPS (256 aa)). The [4Fe-4S] cluster site is built by Cys-81, Cys-85, and Cys-88.

This sequence belongs to the radical SAM superfamily. CofH family. Consists of two subunits, CofG and CofH. [4Fe-4S] cluster serves as cofactor.

It catalyses the reaction 5-amino-6-(D-ribitylamino)uracil + L-tyrosine + S-adenosyl-L-methionine = 5-amino-5-(4-hydroxybenzyl)-6-(D-ribitylimino)-5,6-dihydrouracil + 2-iminoacetate + 5'-deoxyadenosine + L-methionine + H(+). Its pathway is cofactor biosynthesis; coenzyme F0 biosynthesis. Functionally, catalyzes the radical-mediated synthesis of 5-amino-5-(4-hydroxybenzyl)-6-(D-ribitylimino)-5,6-dihydrouracil from 5-amino-6-(D-ribitylamino)uracil and L-tyrosine. The sequence is that of 5-amino-6-(D-ribitylamino)uracil--L-tyrosine 4-hydroxyphenyl transferase from Thermosynechococcus vestitus (strain NIES-2133 / IAM M-273 / BP-1).